A 261-amino-acid chain; its full sequence is Ribosomal RNA small subunit methyltransferase J (261 aa).

S-adenosyl-L-methionine contacts are provided by residues 111–112 (RD), 127–128 (ER), 163–164 (SS), and aspartate 181.

The protein belongs to the methyltransferase superfamily. RsmJ family.

It localises to the cytoplasm. It carries out the reaction guanosine(1516) in 16S rRNA + S-adenosyl-L-methionine = N(2)-methylguanosine(1516) in 16S rRNA + S-adenosyl-L-homocysteine + H(+). Its function is as follows. Specifically methylates the guanosine in position 1516 of 16S rRNA. This Shewanella sp. (strain ANA-3) protein is Ribosomal RNA small subunit methyltransferase J.